The chain runs to 470 residues: Probable E3 ubiquitin-protein ligase TRIML1 (470 aa).

Residues 22–63 (CFICLDYFSSPVTTECGHSFCLMCLLKSWEEHNTPLSCPECW) form an RING-type zinc finger. Coiled coils occupy residues 135–170 (SEAE…KERV) and 196–235 (KEEE…GKMI). The B30.2/SPRY domain maps to 273 to 470 (TELSLCHITG…NTDPLIICHI (198 aa)).

As to quaternary structure, interacts with USP5. As to expression, testis.

It carries out the reaction S-ubiquitinyl-[E2 ubiquitin-conjugating enzyme]-L-cysteine + [acceptor protein]-L-lysine = [E2 ubiquitin-conjugating enzyme]-L-cysteine + N(6)-ubiquitinyl-[acceptor protein]-L-lysine.. The protein operates within protein modification; protein ubiquitination. Functionally, probable E3 ubiquitin-protein ligase which plays an important role in blastocyst development. Involved in progression of blastocyst stage and subsequent embryo development. The sequence is that of Probable E3 ubiquitin-protein ligase TRIML1 (Triml1) from Mus musculus (Mouse).